We begin with the raw amino-acid sequence, 81 residues long: MSFRFVCLILWLLLCASSLAIYFALQPCPGFIVTTLACLLLFQLAYFGSVLLLVCLAAIAQLSARLRIFGIFSENRNHSSK.

Increases exopolysaccharide abundance. In Rhizobium meliloti (strain 1021) (Ensifer meliloti), this protein is Protein SyrA (syrA).